Reading from the N-terminus, the 147-residue chain is Large ribosomal subunit protein uL13 (147 aa).

It belongs to the universal ribosomal protein uL13 family. Part of the 50S ribosomal subunit.

In terms of biological role, this protein is one of the early assembly proteins of the 50S ribosomal subunit, although it is not seen to bind rRNA by itself. It is important during the early stages of 50S assembly. The sequence is that of Large ribosomal subunit protein uL13 from Kocuria rhizophila (strain ATCC 9341 / DSM 348 / NBRC 103217 / DC2201).